A 460-amino-acid polypeptide reads, in one-letter code: MSTTTVTNHTDTIVALASPQGIGAIGVIRLSGPQAFDITSSVFPSKNIAAVPTHTVHVGNIEDEGRILDEVVVTVFKGPKSFTKEDVVEISCHGSTFIVKELLQLLLRKGARHAKPGEFTMRAFLNGRFDLAQAEAVADLISSDSHASHQVALQQMRGGFSDEIRKLREQLIHFASMVELELDFSEEDVEFADRTQLRKLIHEIKRVIDRLIHSFSLGNVIKNGVPTVIIGKPNAGKSTLLNTLLNEEKAIVSEIAGTTRDFIEDELNVEGITFRFIDTAGLREATDAIEAMGVKRTREKMTQASLVIYLFDVKSTSERELIRDLEELKALKAPFLVVGNKIDKREDAIITTFRNIDGIIYISAKQNIGIEELKQNLLEIIQYESFKQNDTLVTNMRHYESLRETRKALDEVLTGMDSQVPGDLLAQDIRQSLFHLGEITGDISTDDLLDNIFSKFCIGK.

(6S)-5-formyl-5,6,7,8-tetrahydrofolate-binding residues include Arg29, Glu89, and Arg128. Residues 224-382 (GVPTVIIGKP…LKQNLLEIIQ (159 aa)) form the TrmE-type G domain. Asn234 provides a ligand contact to K(+). GTP is bound by residues 234 to 239 (NAGKST), 253 to 259 (SEIAGTT), and 278 to 281 (DTAG). Mg(2+) is bound at residue Ser238. K(+)-binding residues include Ser253, Ile255, and Thr258. Residue Thr259 participates in Mg(2+) binding. Lys460 contacts (6S)-5-formyl-5,6,7,8-tetrahydrofolate.

The protein belongs to the TRAFAC class TrmE-Era-EngA-EngB-Septin-like GTPase superfamily. TrmE GTPase family. Homodimer. Heterotetramer of two MnmE and two MnmG subunits. K(+) serves as cofactor.

The protein localises to the cytoplasm. Exhibits a very high intrinsic GTPase hydrolysis rate. Involved in the addition of a carboxymethylaminomethyl (cmnm) group at the wobble position (U34) of certain tRNAs, forming tRNA-cmnm(5)s(2)U34. The chain is tRNA modification GTPase MnmE from Cytophaga hutchinsonii (strain ATCC 33406 / DSM 1761 / CIP 103989 / NBRC 15051 / NCIMB 9469 / D465).